The following is a 1778-amino-acid chain: MVFQSFILGNLVSLCMKIINSVVVVGLYYGFLTTFSIGPSYLFLLRARVMDEGEEGTEKKVSATTGFIAGQLMMFISIYYAPLHLALGRPHTITVLALPYLLFHFFWNNNKHFFDYGSTTRNEMRNLRIQCVFLNNLIFQLFNHFILPSSMLARLVNIYMFRCNNKMLFVTSSFVGWLIGHILFMKWVGLVLVWIQQNNSIRSNVLIRSNKYKFLVSELRNSMARIFSILLFITCVYYLGRIPSPIFTKKLKGTSETGGTKQDPEVSTEEAPFRSLFSEEREDLDKIDEMEEIRVNGKEKINKDDEFHVRTYYNYKTVSENRDGNKENSNLKFLKIKEDPFFFLWFEKPFVTLVFDYKRWNRPNRYIKNDKIENTVRNEMSQYFFYTCQSDGKERISFTYPPNLSTFFEMIQKKISSFTRAKAPSDQVYAYWSLLNEKKKENLKNEFLNRIEALDLDKERSFENILEKTTRFCHNETKKEYLPKLYDPFLHGISRGKIKKLLPFKKITDINIGIGGSWINKIHGILLRINSHKFEQTIEKFTRKSLSIEKKLSFFSEPQEEKINSEEEIKIFKFLFDVVITDNNNKTLIKNFIDFHEINKNVPRWSYKLTSELEELEGENEENVPTEPGIRSRKAKSVVVFTDKEPHNGIFTNLKDNQNSDQKDEMALIRYSQHSDFRRDLIKGSMRSQRRKTVIWDFFQAKVHSPLFFDRIDKLFFFSFDFWGLKKKIIRNFMWKKKKKEFLKKEDEQSKRKETRRIEIAETWDSFPFSQIIRGSLLVTQSILRKYIILPLLIIIKNSTRALLFQVPEWSEDLKDWKREMHVKCTYNGVQLSETEFPRNWLTDGIQIKILFPFYLKPWHKLKVQSSQKARLKKIKDKGEKTDFGFLTVWGMETELPFGSAKKKRSFFEPIFKELKKRIKKFKTKPFRVLSIFKERATIFLKVTKERKNWIIKNLLFRKGKRKNISKQNIIPLFGVREIDELNETKKDSIMSNQMIYELSGQKKSMEWPNSSLNENKIKNLIDRIKIIKNQTEEISKEKENLTNRCNKPRYDSQIIASSKKRWQAFKRKNIRLIRKSFFFFKFCIEQLSITFFLGIINIPRITTQLQLFFESTKTILDKYIYKNEENGEKKKNQKNTIYFISTLKNLISKNKKFSYDLCSLSQAYVFYKLSQIQVSNFSKLKAVLEYNICITSFFVKNQIKDFCQEQGIFHYELKDKTFFNSEVNPWKYWLRSHSQYNLPWIAWARLVTQKWKKKINQDFLVLNTSLIKTDLYEKNKIDNYKKQQFFEANSLLNSKHNLKKDYIYNSFCYRSIHSREKKFDMSMSIGITPDNCLVSSFLEKYNIQVIGEIGHRKYLDWRILNFWFRKKVNIGLLIDTKSKKKYIKTKVQNYKKIDKITKTDLANQKSFFFDWMGMNEERLNHRITNFAFFFFSEFFLFSSTYKTKPWVIPIKLLLFNFNEKKNVNKKITLKKKGFIPSNEKGPLRFFNLNKEENELVGQGELESDNEKKRNPESALSNQEKNIEKNYAESKIKKRQNKKQYKSHTEAELYLFLTRYSRFQLRWNCFFNQKILNNIKVYCLLVRLKNPNEIAISSIERGELSLDILMIEKNFTFSKLMKKGILIIEPVRLSVKNDGQLIIYRTVGISLVHKNKQKISKRYKKKSYIDKKNNYDFFIPENILSPKRRREFRILICFNLKKKNARDRNSRFDKNIQNLTTVLHKKKDLYKDKKTLIKLKSFLWPNFRLEDLACMNRYWFNTTNGNHFSMIRIHMYARFQIR.

6 helical membrane passes run 18–38, 67–87, 90–110, 132–152, 175–195, and 226–246; these read IINSVVVVGLYYGFLTTFSIG, FIAGQLMMFISIYYAPLHLAL, PHTITVLALPYLLFHFFWNNN, VFLNNLIFQLFNHFILPSSML, VGWLIGHILFMKWVGLVLVWI, and IFSILLFITCVYYLGRIPSPI. The tract at residues 1498–1520 is disordered; it reads GQGELESDNEKKRNPESALSNQE.

Belongs to the TIC214 family. Part of the Tic complex.

It localises to the plastid. The protein localises to the chloroplast inner membrane. Its function is as follows. Involved in protein precursor import into chloroplasts. May be part of an intermediate translocation complex acting as a protein-conducting channel at the inner envelope. The chain is Protein TIC 214 from Arabis hirsuta (Hairy rock-cress).